The following is a 297-amino-acid chain: MEEPTAVEGQVQLPSPHQGSLRKAVAAALALDGESTMGHRKKKRKESRPESIIIYRSDNEKTDEEPGESEGGDQPKEEEGDDFLDYPVDDDMWNLPLDSRYVTLTGTITRGKKKGQMVDIHVTLTEKELQELTKPKESSRETTPEGRMACQMGADRGPHVVLWTLICLPVVFILSFVVSFYYGTITWYNIFLVYNEERTFWHKISYCPCLVLFYPVLIMAMASSLGLYAAVVQLSWSWEAWWQAARDMEKGFCGWLCSKLGLEDCSPYSIVELLESDNISSTLSNKDPIQEVETSTV.

The interval 1-85 (MEEPTAVEGQ…KEEEGDDFLD (85 aa)) is disordered. The Extracellular segment spans residues 1-159 (MEEPTAVEGQ…CQMGADRGPH (159 aa)). The span at 61–85 (KTDEEPGESEGGDQPKEEEGDDFLD) shows a compositional bias: acidic residues. Residues 160–180 (VVLWTLICLPVVFILSFVVSF) traverse the membrane as a helical segment. Topologically, residues 181 to 210 (YYGTITWYNIFLVYNEERTFWHKISYCPCL) are cytoplasmic. A helical membrane pass occupies residues 211–231 (VLFYPVLIMAMASSLGLYAAV). At 232-297 (VQLSWSWEAW…PIQEVETSTV (66 aa)) the chain is on the extracellular side.

The protein localises to the membrane. The polypeptide is Transmembrane protein 169 (TMEM169) (Homo sapiens (Human)).